A 65-amino-acid chain; its full sequence is Large ribosomal subunit protein bL35 (65 aa).

The disordered stretch occupies residues 1-28 (MPKMKTHRGAAKRFKKTGTGKIKRGQSK).

The protein belongs to the bacterial ribosomal protein bL35 family.

The chain is Large ribosomal subunit protein bL35 from Acidobacterium capsulatum (strain ATCC 51196 / DSM 11244 / BCRC 80197 / JCM 7670 / NBRC 15755 / NCIMB 13165 / 161).